The following is a 116-amino-acid chain: MVPKPLSLLLFLLLALSAAVVGGRKLVAAGGWRPIESLNSAEVQDVAQFAVSEHNKQANDELQYQSVVRGYTQVVAGTNYRLVIAAKDGAVVGNYEAVVWDKPWMHFRNLTSFRKV.

An N-terminal signal peptide occupies residues 1–26; that stretch reads MVPKPLSLLLFLLLALSAAVVGGRKL. The 60-residue stretch at 30–89 folds into the Cystatin domain; sequence GGWRPIESLNSAEVQDVAQFAVSEHNKQANDELQYQSVVRGYTQVVAGTNYRLVIAAKDG. The Secondary area of contact motif lies at 73-77; sequence QVVAG. A glycan (N-linked (GlcNAc...) asparagine) is linked at asparagine 109.

This sequence belongs to the cystatin family. Phytocystatin subfamily. Post-translationally, glycosylated.

The protein resides in the secreted. Its function is as follows. Specific inhibitor of papain family cysteine proteinases. Inhibits papain, chymopapain, bromelain, ficin, human cathepsins B, H and L, actinidain and house dustmite endopeptidase 1, but does not inhibit human bleomycin hydrolase. Inhibits papain with an IC(50) of 2.47 nM. Does not inhibit cysteine proteinases belonging to other families including clostripain, streptopain and calpain. The sequence is that of Cysteine proteinase inhibitor 1 from Actinidia deliciosa (Kiwi).